The chain runs to 394 residues: 5-azacytidine-induced protein 2 (394 aa).

The segment at 1 to 197 (MDALVEDDIC…IELRKAKQTD (197 aa)) is homodimerization. 2 coiled-coil regions span residues 40–76 (ALVT…LIAR) and 102–196 (DRDN…AKQT). The tract at residues 216–257 (SDNMQHAYWELKREMSNLHLVTQVQAELLRKLKTSTAIKKAC) is interaction with TBK1 and IKBKE. A phosphoserine mark is found at S318 and S355. A disordered region spans residues 355–379 (SPPKSSETAFGETKSKTLPLPNLPP).

As to quaternary structure, homodimer. Interacts with IKBKE, TBK1 and TICAM1. Interacts with TAX1BP1. Interacts with CALCOCO2. Ubiquitinated via 'Lys-48'-linked polyubiquitination by TRIM38, leading to its degradation.

The protein resides in the cytoplasm. Its function is as follows. Adapter protein which binds TBK1 and IKBKE playing a role in antiviral innate immunity. Activates serine/threonine-protein kinase TBK1 and facilitates its oligomerization. Enhances the phosphorylation of NF-kappa-B p65 subunit RELA by TBK1. Promotes TBK1-induced as well as TNF-alpha or PMA-induced activation of NF-kappa-B. Participates in IFNB promoter activation via TICAM1. The sequence is that of 5-azacytidine-induced protein 2 (AZI2) from Macaca fascicularis (Crab-eating macaque).